The primary structure comprises 484 residues: Auxin transporter-like protein 2 (484 aa).

Topologically, residues 1–59 (MLPQKQGEEAIVSSFNETDQQEGVVGREEEVEDHSFSVKNFLWHGGSVWDAWFSCASNQ) are cytoplasmic. The chain crosses the membrane as a helical span at residues 60-77 (VAQVLLTLPYSFSQLGML). The Extracellular portion of the chain corresponds to 78–79 (SG). A helical membrane pass occupies residues 80 to 100 (ILLQVFYGILGSWTAYLISVL). Residues 101–135 (YVEYRSRKEKENVNFKNHVIQWFEVLDGLLGPYWK) are Cytoplasmic-facing. The helical transmembrane segment at 136–156 (ALGLAFNCTFLLFGSVIQLIA) threads the bilayer. Residues 157–172 (CASNIYYINDNLDKRT) are Extracellular-facing. A helical membrane pass occupies residues 173–193 (WTYIFGACCATTVFIPSFHNY). Residues 194 to 196 (RIW) are Cytoplasmic-facing. A helical transmembrane segment spans residues 197-217 (SFLGLGMTTYTAWYLTIASIV). The Extracellular portion of the chain corresponds to 218–232 (HGQAENVTHTGPKKL). An N-linked (GlcNAc...) asparagine glycan is attached at Asn223. Residues 233 to 253 (VLYFTGATNILYTFGGHAVTV) form a helical membrane-spanning segment. Residues 254-266 (EIMHAMWKPQKFK) are Cytoplasmic-facing. A helical transmembrane segment spans residues 267-287 (YIYLMATLYVFTLTIPSATAV). Topologically, residues 288–314 (YWAFGDELLNHSNAFSLLPKNGWRDGA) are extracellular. N-linked (GlcNAc...) asparagine glycosylation occurs at Asn297. The chain crosses the membrane as a helical span at residues 315-335 (VILMLIHQFITFGFACTPLYF). Topologically, residues 336–356 (VWEKVIGMHDTRSICLRALAR) are cytoplasmic. A helical membrane pass occupies residues 357–377 (LPVVIPIWFLAIIFPFFGPIN). Ser378 is a topological domain (extracellular). A helical membrane pass occupies residues 379 to 399 (AVGALLVSFTVYIIPSAAHML). Residues 400-425 (TYRKASARKNAAEKPPFFMPSWTAMY) are Cytoplasmic-facing. A helical membrane pass occupies residues 426–446 (IFNAFIVIWVLVVGFGFGGWA). Topologically, residues 447–484 (SMTNFIRQIDTFGLFAKCYQCKPPPVMAAAPPPHALHH) are extracellular.

Belongs to the amino acid/polyamine transporter 2 family. Amino acid/auxin permease (AAAP) (TC 2.A.18.1) subfamily. In terms of tissue distribution, shoots and roots of nodulating plants. Higher levels in roots, flowers and stems, lower in nodules, leaves, petioles and shoot apices.

It localises to the cell membrane. Functionally, carrier protein involved in proton-driven auxin influx. Mediates the formation of auxin gradient from developing leaves (site of auxin biosynthesis) to tips by contributing to the loading of auxin in vascular tissues and facilitating acropetal (base to tip) auxin transport within inner tissues of the root apex, and basipetal (tip to base) auxin transport within outer tissues of the root apex. May be involved in lateral roots and nodules formation. The protein is Auxin transporter-like protein 2 (LAX2) of Medicago truncatula (Barrel medic).